Consider the following 364-residue polypeptide: MLEMTIRALIVDDSALIRKLLSDILSQDPNLRIIGTAFNGKDGLEKIKKLRPDVVLLDNIMPVFDGLKTLAWIVKECPTPVVMISAFGERAEEITLTAFEYGAVDVIQRPEGILSQNMPDMAEEICRKTRAATKANLENLECMRNRELEETDINKREKIEKHRSRKETTSFVRNVLAIGASTGGPRALEKLIGSFPADIPAAVLIVQHMPAGFTASFSKRLDSKTALRVKEAEEGDIIEEGTVLIAPGNHHMEIVQKTVKGRKEEVAHLSCSPKELGSRPSVNALFRSIAPIYGSKIVSLVLTGMNCDGADGAEQVKKMGGKIIAEAQSSCVVYGMPKEVVRRKLADFVLPLDKMAEEIVKIIS.

Residues 7–124 form the Response regulatory domain; the sequence is RALIVDDSAL…SQNMPDMAEE (118 aa). 4-aspartylphosphate is present on Asp-58. Residues 167–364 enclose the CheB-type methylesterase domain; it reads ETTSFVRNVL…MAEEIVKIIS (198 aa). Catalysis depends on residues Ser-181, His-208, and Asp-308.

This sequence belongs to the CheB family. In terms of processing, phosphorylated by CheA. Phosphorylation of the N-terminal regulatory domain activates the methylesterase activity.

The protein resides in the cytoplasm. It carries out the reaction [protein]-L-glutamate 5-O-methyl ester + H2O = L-glutamyl-[protein] + methanol + H(+). The catalysed reaction is L-glutaminyl-[protein] + H2O = L-glutamyl-[protein] + NH4(+). Involved in chemotaxis. Part of a chemotaxis signal transduction system that modulates chemotaxis in response to various stimuli. Catalyzes the demethylation of specific methylglutamate residues introduced into the chemoreceptors (methyl-accepting chemotaxis proteins or MCP) by CheR. Also mediates the irreversible deamidation of specific glutamine residues to glutamic acid. This Methanosarcina barkeri (strain Fusaro / DSM 804) protein is Protein-glutamate methylesterase/protein-glutamine glutaminase.